Reading from the N-terminus, the 123-residue chain is Small ribosomal subunit protein uS12 (123 aa).

D89 is modified (3-methylthioaspartic acid).

The protein belongs to the universal ribosomal protein uS12 family. Part of the 30S ribosomal subunit. Contacts proteins S8 and S17. May interact with IF1 in the 30S initiation complex.

Functionally, with S4 and S5 plays an important role in translational accuracy. Its function is as follows. Interacts with and stabilizes bases of the 16S rRNA that are involved in tRNA selection in the A site and with the mRNA backbone. Located at the interface of the 30S and 50S subunits, it traverses the body of the 30S subunit contacting proteins on the other side and probably holding the rRNA structure together. The combined cluster of proteins S8, S12 and S17 appears to hold together the shoulder and platform of the 30S subunit. In Brucella anthropi (strain ATCC 49188 / DSM 6882 / CCUG 24695 / JCM 21032 / LMG 3331 / NBRC 15819 / NCTC 12168 / Alc 37) (Ochrobactrum anthropi), this protein is Small ribosomal subunit protein uS12.